The primary structure comprises 528 residues: Protein spinster homolog 1 (528 aa).

A disordered region spans residues 1-38 (MAGSDTAPFLSQADDPDDGPAPGHPGLPGPMGNPKSGE). N-acetylalanine is present on Ala-2. Transmembrane regions (helical) follow at residues 60-80 (LIVV…FTVA), 98-118 (GLIQ…FGYL), 126-146 (YLMC…SFIP), 160-180 (VGVG…DLFV), 187-207 (MLSI…IAGS), 218-238 (WALR…FLVV), 278-298 (LGFT…PAFL), 323-343 (LIFG…GVEI), 357-377 (LVCA…LACA), 381-401 (IVAT…NWAI), 421-441 (FQIV…IGLI), and 465-485 (MLCA…AMFI). Phosphoserine is present on Ser-518.

It belongs to the major facilitator superfamily. Spinster (TC 2.A.1.49) family. Interacts with BCL2 and BCL2L1.

The protein localises to the lysosome membrane. It carries out the reaction a 1-acyl-sn-glycero-3-phosphocholine(out) + H(+)(out) = a 1-acyl-sn-glycero-3-phosphocholine(in) + H(+)(in). The catalysed reaction is 1-hexadecanoyl-sn-glycero-3-phosphocholine(out) + H(+)(out) = 1-hexadecanoyl-sn-glycero-3-phosphocholine(in) + H(+)(in). It catalyses the reaction 1-(9Z-octadecenoyl)-sn-glycero-3-phosphocholine(out) + H(+)(out) = 1-(9Z-octadecenoyl)-sn-glycero-3-phosphocholine(in) + H(+)(in). The enzyme catalyses 1-(5Z,8Z,11Z,14Z-eicosatetraenoyl)-sn-glycero-3-phosphocholine(out) + H(+)(out) = 1-(5Z,8Z,11Z,14Z-eicosatetraenoyl)-sn-glycero-3-phosphocholine(in) + H(+)(in). It carries out the reaction 1-(4Z,7Z,10Z,13Z,16Z,19Z-docosahexaenoyl)-sn-glycero-3-phosphocholine(out) + H(+)(out) = 1-(4Z,7Z,10Z,13Z,16Z,19Z-docosahexaenoyl)-sn-glycero-3-phosphocholine(in) + H(+)(in). The catalysed reaction is a 1-acyl-sn-glycero-3-phosphoethanolamine(out) + H(+)(out) = a 1-acyl-sn-glycero-3-phosphoethanolamine(in) + H(+)(in). It catalyses the reaction 1-(9Z-octadecenoyl)-sn-glycero-3-phosphoethanolamine(out) + H(+)(out) = 1-(9Z-octadecenoyl)-sn-glycero-3-phosphoethanolamine(in) + H(+)(in). The enzyme catalyses 1-acyl-sn-glycero-3-phospho-(1'-sn-glycerol)(out) + H(+)(out) = 1-acyl-sn-glycero-3-phospho-(1'-sn-glycerol)(in) + H(+)(in). It carries out the reaction 1-(9Z-octadecenoyl)-sn-glycero-3-phospho-(1'-sn-glycerol)(out) + H(+)(out) = 1-(9Z-octadecenoyl)-sn-glycero-3-phospho-(1'-sn-glycerol)(in) + H(+)(in). The catalysed reaction is a 1-O-(1Z-alkenyl)-sn-glycero-3-phosphocholine(out) + H(+)(out) = a 1-O-(1Z-alkenyl)-sn-glycero-3-phosphocholine(in) + H(+)(in). It catalyses the reaction 1-(1Z-hexadecenyl)-sn-glycero-3-phosphocholine(out) + H(+)(out) = 1-(1Z-hexadecenyl)-sn-glycero-3-phosphocholine(in) + H(+)(in). The enzyme catalyses a 1-O-(1Z-alkenyl)-sn-glycero-3-phosphoethanolamine(out) + H(+)(out) = a 1-O-(1Z-alkenyl)-sn-glycero-3-phosphoethanolamine(in) + H(+)(in). It carries out the reaction 1-O-(1Z-hexadecenyl)-sn-glycero-3-phosphoethanolamine(out) + H(+)(out) = 1-O-(1Z-hexadecenyl)-sn-glycero-3-phosphoethanolamine(in) + H(+)(in). Its function is as follows. Plays a critical role in the phospholipid salvage pathway from lysosomes to the cytosol. Mediates the rate-limiting, proton-dependent, lysosomal efflux of lysophospholipids, which can then be reacylated by acyltransferases in the endoplasmic reticulum to form phospholipids. Selective for zwitterionic headgroups such as lysophosphatidylcholine (LPC) and lysophosphatidylethanolamine (LPE), can also transport lysophosphatidylglycerol (LPG), but not other anionic lysophospholipids, sphingosine, nor sphingomyelin. Transports lysophospholipids with saturated, monounsaturated, and polyunsaturated fatty acids, such as 1-hexadecanoyl-sn-glycero-3-phosphocholine, 1-(9Z-octadecenoyl)-sn-glycero-3-phosphocholine and 1-(4Z,7Z,10Z,13Z,16Z,19Z-docosahexaenoyl)-sn-glycero-3-phosphocholine, respectively. Can also transport lysoplasmalogen (LPC with a fatty alcohol) such as 1-(1Z-hexadecenyl)-sn-glycero-3-phosphocholine. Essential player in lysosomal homeostasis. Crucial for cell survival under conditions of nutrient limitation. May be involved in necrotic or autophagic cell death. This chain is Protein spinster homolog 1 (Spns1), found in Rattus norvegicus (Rat).